A 247-amino-acid chain; its full sequence is 2,3-bisphosphoglycerate-dependent phosphoglycerate mutase (247 aa).

Substrate-binding positions include 9–16 (RHGESEWN), 22–23 (TG), Arg61, 88–91 (ERHY), Lys99, 115–116 (RR), and 183–184 (GN). His10 (tele-phosphohistidine intermediate) is an active-site residue. Glu88 functions as the Proton donor/acceptor in the catalytic mechanism.

The protein belongs to the phosphoglycerate mutase family. BPG-dependent PGAM subfamily.

The enzyme catalyses (2R)-2-phosphoglycerate = (2R)-3-phosphoglycerate. Its pathway is carbohydrate degradation; glycolysis; pyruvate from D-glyceraldehyde 3-phosphate: step 3/5. Functionally, catalyzes the interconversion of 2-phosphoglycerate and 3-phosphoglycerate. In Nocardioides sp. (strain ATCC BAA-499 / JS614), this protein is 2,3-bisphosphoglycerate-dependent phosphoglycerate mutase.